We begin with the raw amino-acid sequence, 296 residues long: Small ribosomal subunit biogenesis GTPase RsgA (296 aa).

A CP-type G domain is found at 65–223; sequence INRIGRPAVA…LADTPGFSSI (159 aa). GTP is bound by residues 114–117 and 166–174; these read SKAD and GQSGAGKST. Residues cysteine 247, cysteine 252, histidine 254, and cysteine 260 each contribute to the Zn(2+) site.

The protein belongs to the TRAFAC class YlqF/YawG GTPase family. RsgA subfamily. As to quaternary structure, monomer. Associates with 30S ribosomal subunit, binds 16S rRNA. Zn(2+) is required as a cofactor.

It localises to the cytoplasm. In terms of biological role, one of several proteins that assist in the late maturation steps of the functional core of the 30S ribosomal subunit. Helps release RbfA from mature subunits. May play a role in the assembly of ribosomal proteins into the subunit. Circularly permuted GTPase that catalyzes slow GTP hydrolysis, GTPase activity is stimulated by the 30S ribosomal subunit. The sequence is that of Small ribosomal subunit biogenesis GTPase RsgA from Lactobacillus acidophilus (strain ATCC 700396 / NCK56 / N2 / NCFM).